Here is a 760-residue protein sequence, read N- to C-terminus: MQAKKRYILVFVSCAFLAYAYFGGYRLKVSPLRPRRAQHESAKDGGVQPHEQLPSFLGAHDMQELQLLQSNQSKSLDSSKHLVTRKPDCRMETCFDFTRCYDRFLVYIYPPEPLNSLGAAPPTSANYQKILTAIQESRYYTSDPTAACLFVLGIDTLDRDSLSEDYVRNVPSRLARLPYWNNGRNHIIFNLYSGTWPDYAENSLGFDAGEAILAKASMGVLQLRHGFDVSIPLFHKQFPLRAGATGTVQSNNFPANKKYLLAFKGKRYVHGIGSETRNSLFHLHNGRDMVLVTTCRHGKSWRELQDNRCDEDNREYDRYDYETLLQNSTFCLVPRGRRLGSFRFLEALQAGCIPVLLSNAWVLPFESKIDWKQAAIWADERLLLQVPDIVRSIPAERIFALRQQTQVLWERYFGSIEKIVFTTFEIIRERLPDYPVRSSLVWNSSPGALLTLPTFADSSRYMPFLLNSMGAEPRHNYTAVIYVQIGAALGPNAALYKLVRTITKSQFVERILVLWAADRPLPLKKRWPPTSHIPLHVISLGGSTRSQGAGPTSQTTEGRPSISQRFLPYDEIQTDAVLSLDEDAILNTDELDFAYTVWRDFPERIVGYPARAHFWDDSKNAWGYTSKWTNYYSIVLTGAAFYHRYYNYLYTNWLSLLLLKTVQQSSNCEDILMNLLVSHVTRKPPIKVTQRKGYKDRETGRSPWNDPDHFIQRQSCLNTFAAVFGYMPLIRSNLRMDPMLYRDPVSNLRKKYRQIELVGS.

At 1-6 (MQAKKR) the chain is on the cytoplasmic side. The chain crosses the membrane as a helical; Signal-anchor for type II membrane protein span at residues 7-25 (YILVFVSCAFLAYAYFGGY). At 26-760 (RLKVSPLRPR…KYRQIELVGS (735 aa)) the chain is on the lumenal side. N-linked (GlcNAc...) asparagine glycosylation is found at N71 and N327. Residue R437 participates in UDP-N-acetyl-alpha-D-glucosamine binding. An N-linked (GlcNAc...) asparagine glycan is attached at N476. A disordered region spans residues 540–560 (LGGSTRSQGAGPTSQTTEGRP). Positions 541–560 (GGSTRSQGAGPTSQTTEGRP) are enriched in polar residues. Residues R565, D581, E582, D583, E669, D670, and R713 each contribute to the UDP-N-acetyl-alpha-D-glucosamine site. D583 serves as a coordination point for Mn(2+). C668 and C716 form a disulfide bridge. D670 is an active-site residue.

It belongs to the glycosyltransferase 47 family. As to quaternary structure, interacts with sau. Requires Mn(2+) as cofactor. As to expression, ubiquitously expressed in early embryos. Later (in stage 10 embryos), it is expressed at higher level in the nervous system. Ubiquitously expressed in wing imaginal disk.

Its subcellular location is the endoplasmic reticulum membrane. The protein resides in the golgi apparatus membrane. The catalysed reaction is 3-O-{[(1-&gt;4)-beta-D-GlcA-(1-&gt;4)-alpha-D-GlcNAc](n)-(1-&gt;4)-beta-D-GlcA-(1-&gt;3)-beta-D-Gal-(1-&gt;3)-beta-D-Gal-(1-&gt;4)-beta-D-Xyl}-L-seryl-[protein] + UDP-N-acetyl-alpha-D-glucosamine = 3-O-{alpha-D-GlcNAc-[(1-&gt;4)-beta-D-GlcA-(1-&gt;4)-alpha-D-GlcNAc](n)-(1-&gt;4)-beta-D-GlcA-(1-&gt;3)-beta-D-Gal-(1-&gt;3)-beta-D-Gal-(1-&gt;4)-beta-D-Xyl}-L-seryl-[protein] + UDP + H(+). It catalyses the reaction 3-O-{alpha-D-GlcNAc-[(1-&gt;4)-beta-D-GlcA-(1-&gt;4)-alpha-D-GlcNAc](n)-(1-&gt;4)-beta-D-GlcA-(1-&gt;3)-beta-D-Gal-(1-&gt;3)-beta-D-Gal-(1-&gt;4)-beta-D-Xyl}-L-seryl-[protein] + UDP-alpha-D-glucuronate = 3-O-{[(1-&gt;4)-beta-D-GlcA-(1-&gt;4)-alpha-D-GlcNAc](n+1)-(1-&gt;4)-beta-D-GlcA-(1-&gt;3)-beta-D-Gal-(1-&gt;3)-beta-D-Gal-(1-&gt;4)-beta-D-Xyl}-L-seryl-[protein] + UDP + H(+). The protein operates within protein modification; protein glycosylation. It participates in glycan metabolism; heparan sulfate biosynthesis. Its pathway is glycan metabolism; heparin biosynthesis. In terms of biological role, glycosyltransferase required for the biosynthesis of heparan-sulfate and responsible for the alternating addition of beta-1-4-linked glucuronic acid (GlcA) and alpha-1-4-linked N-acetylglucosamine (GlcNAc) units to nascent heparan sulfate chains. Botv is the trigger of heparan sulfate chain initiation and polymerization takes place by a complex of ttv and sotv. Plays a central role in the diffusion of morphogens hedgehog (hh), wingless (wg) and decapentaplegic (dpp) via its role in heparan sulfate proteoglycans (HSPGs) biosynthesis which are required for movement of hh, dpp and wg morphogens. This chain is Exostosin-1 (ttv), found in Drosophila melanogaster (Fruit fly).